The following is a 137-amino-acid chain: Nucleoside diphosphate kinase (137 aa).

The ATP site is built by K10, F58, R86, T92, R103, and N113. H116 functions as the Pros-phosphohistidine intermediate in the catalytic mechanism.

It belongs to the NDK family. Homotetramer. Mg(2+) serves as cofactor.

Its subcellular location is the cytoplasm. The enzyme catalyses a 2'-deoxyribonucleoside 5'-diphosphate + ATP = a 2'-deoxyribonucleoside 5'-triphosphate + ADP. It catalyses the reaction a ribonucleoside 5'-diphosphate + ATP = a ribonucleoside 5'-triphosphate + ADP. Major role in the synthesis of nucleoside triphosphates other than ATP. The ATP gamma phosphate is transferred to the NDP beta phosphate via a ping-pong mechanism, using a phosphorylated active-site intermediate. The sequence is that of Nucleoside diphosphate kinase from Helicobacter pylori (strain Shi470).